We begin with the raw amino-acid sequence, 363 residues long: NAD(P)H-quinone oxidoreductase subunit 1, chloroplastic (363 aa).

Helical transmembrane passes span 30–50, 104–124, 127–147, 253–273, 300–320, and 343–363; these read LVPI…IVWL, IAVI…HLVL, LGIG…GLLM, FGLF…FVTV, VFGT…FLFI, and FLLP…LLSL.

Belongs to the complex I subunit 1 family. In terms of assembly, NDH is composed of at least 16 different subunits, 5 of which are encoded in the nucleus.

The protein resides in the plastid. It localises to the chloroplast thylakoid membrane. The enzyme catalyses a plastoquinone + NADH + (n+1) H(+)(in) = a plastoquinol + NAD(+) + n H(+)(out). It catalyses the reaction a plastoquinone + NADPH + (n+1) H(+)(in) = a plastoquinol + NADP(+) + n H(+)(out). Functionally, NDH shuttles electrons from NAD(P)H:plastoquinone, via FMN and iron-sulfur (Fe-S) centers, to quinones in the photosynthetic chain and possibly in a chloroplast respiratory chain. The immediate electron acceptor for the enzyme in this species is believed to be plastoquinone. Couples the redox reaction to proton translocation, and thus conserves the redox energy in a proton gradient. The polypeptide is NAD(P)H-quinone oxidoreductase subunit 1, chloroplastic (Piper cenocladum (Ant piper)).